Here is a 287-residue protein sequence, read N- to C-terminus: UPF0761 membrane protein MS0032 (287 aa).

6 consecutive transmembrane segments (helical) span residues 37–57, 93–113, 128–148, 174–194, 204–224, and 238–258; these read MLAI…FPMF, SMSA…INQI, FIFS…FIGM, LLSF…YTLV, AAVG…AFAW, and AMAT…FILL.

The protein belongs to the UPF0761 family.

The protein localises to the cell inner membrane. The sequence is that of UPF0761 membrane protein MS0032 from Mannheimia succiniciproducens (strain KCTC 0769BP / MBEL55E).